The following is a 335-amino-acid chain: MTLPLLGPMSLSGFEHPWFFLFFFVVIGLVALYIVVQLARQKRMLRFANMELLESVAPKQPSRMRHLPAVLMILSLVSFTIAMAGPTHDVRIPRNRAVVMLVIDVSQSMRATDVAPNRLTAAQEAAKQFADQLTPGINLGLIAYAGTATVLVSPTTNRESTKTAIDKLQLADRTATGEGIFTALQAIATVGAVIGGGDEPPPARVVLMSDGKETVPSNPDNPKGAYTAARTAKDQGVPISTVSFGTPYGYVEINEQRQPVPVDDEMLKKIADLSGGEAFTASSLEQLKQVFTNLQEQIGYETIKGDASVGWLRLGAGVLALAALGALLINRRLPN.

2 helical membrane-spanning segments follow: residues 18-38 and 67-87; these read WFFL…VVQL and LPAV…AGPT. In terms of domain architecture, VWFA spans 98–294; it reads VVMLVIDVSQ…EQLKQVFTNL (197 aa). A helical membrane pass occupies residues 309–329; sequence VGWLRLGAGVLALAALGALLI.

Belongs to the UPF0353 family.

Its subcellular location is the cell membrane. The polypeptide is UPF0353 protein Mflv_3659 (Mycolicibacterium gilvum (strain PYR-GCK) (Mycobacterium gilvum (strain PYR-GCK))).